The chain runs to 316 residues: Actinorhodin polyketide synthase bifunctional cyclase/dehydratase (316 aa).

It participates in antibiotic biosynthesis; actinorhodin biosynthesis. Its function is as follows. Is needed for correct cyclization of the oligoketide leading to isochromanequinone formation. This chain is Actinorhodin polyketide synthase bifunctional cyclase/dehydratase, found in Streptomyces coelicolor (strain ATCC BAA-471 / A3(2) / M145).